The following is an 87-amino-acid chain: RNA-binding protein Hfq (87 aa).

A Sm domain is found at 9–68 (DPFLNTLRRERIPVSIYLVNGIKLQGYIESFDQFVILLKNSISQMIYKHAISTVVPNHTN). The disordered stretch occupies residues 66–87 (HTNNQEHNQSQYNNNNACISKP).

It belongs to the Hfq family. Homohexamer.

Its function is as follows. RNA chaperone that binds small regulatory RNA (sRNAs) and mRNAs to facilitate mRNA translational regulation in response to envelope stress, environmental stress and changes in metabolite concentrations. Also binds with high specificity to tRNAs. In Wigglesworthia glossinidia brevipalpis, this protein is RNA-binding protein Hfq.